The following is a 1837-amino-acid chain: Zinc finger SWIM domain-containing protein 8 (1837 aa).

Phosphoserine occurs at positions 36, 48, and 53. The interval 45-65 is disordered; the sequence is RKQSAGPNSPTGGGGGGGSGG. Over residues 55-65 the composition is skewed to gly residues; the sequence is TGGGGGGGSGG. Residues 172-208 form an SWIM-type zinc finger; it reads YNVAVMFDRCRVTSCSCTCGAGAKWCTHVVALCLFRI. Serine 437 carries the post-translational modification Phosphoserine. 3 disordered regions span residues 514–727, 803–823, and 1016–1232; these read SRPG…EEDD, NPPD…KVST, and SQTH…VPNQ. Composition is skewed to basic and acidic residues over residues 523 to 532 and 566 to 575; these read GLEESRDRPR and LSAEGGDKAL. Residue serine 567 is modified to Phosphoserine. Over residues 579 to 602 the composition is skewed to gly residues; that stretch reads GPGGGKAKALGGAGSGSKGSAGGG. Residues 1019-1040 are compositionally biased toward polar residues; sequence HKPQTLSSFYSSSRPTTASQRS. A compositionally biased stretch (gly residues) spans 1119–1130; sequence SRGGYNGRGWGS. At threonine 1139 the chain carries Phosphothreonine. Polar residues predominate over residues 1144 to 1159; sequence IDSSAPETTSDSSPTL. Residues serine 1153, serine 1156, and serine 1160 each carry the phosphoserine modification. Low complexity predominate over residues 1174-1209; it reads GRGQDSDSISSSSSDSLGSSSSSGSRRASASGGARA. Basic and acidic residues predominate over residues 1210-1226; sequence KTVEVGRYKGRRPESHA. At serine 1267 the chain carries Phosphoserine. 2 disordered regions span residues 1442-1464 and 1635-1656; these read SASG…GGPG and QPSP…SQPV. Over residues 1447–1464 the composition is skewed to gly residues; that stretch reads RAGGEAGRGMPEGRGGPG. A Phosphoserine modification is found at serine 1836.

It belongs to the ZSWIM8 family. In terms of assembly, component of the SCF-like E3 ubiquitin-protein ligase complex which contains CUL3, RBX1, ELOB, ELOC and ZSWIM8. (Microbial infection) Interacts with Zika virus protein NS5; this interaction allows STAT2 binding and subsequent proteasomal degradation.

It is found in the cytoplasm. Its subcellular location is the cytosol. Its pathway is protein modification; protein ubiquitination. Its function is as follows. Substrate recognition component of a SCF-like E3 ubiquitin-protein ligase complex that promotes target-directed microRNA degradation (TDMD), a process that mediates degradation of microRNAs (miRNAs). The SCF-like E3 ubiquitin-protein ligase complex acts by catalyzing ubiquitination and subsequent degradation of AGO proteins (AGO1, AGO2, AGO3 and/or AGO4), thereby exposing miRNAs for degradation. Specifically recognizes and binds AGO proteins when they are engaged with a TDMD target. May also act as a regulator of axon guidance: specifically recognizes misfolded ROBO3 and promotes its ubiquitination and subsequent degradation. Plays an essential role for proper embryonic development of heart and lung. Controls protein quality of DAB1, a key signal molecule for brain development, thus protecting its signaling strength. Mechanistically, recognizes intrinsically disordered regions of DAB1 and eliminates misfolded DAB1 that cannot be properly phosphorylated. Functionally, (Microbial infection) Participates in Zika virus inhibition of IFN signaling by acting as a scaffold protein to connect ZSWIM8/CUL3 ligase complex and STAT2, leading to STAT2 degradation. This is Zinc finger SWIM domain-containing protein 8 from Homo sapiens (Human).